Reading from the N-terminus, the 390-residue chain is Chorismate synthase 2 (390 aa).

The NADP(+) site is built by Arg39 and Arg45. Residues 132–134, 253–254, Gly298, 313–317, and Arg339 contribute to the FMN site; these read RSS, NA, and KPIPT.

The protein belongs to the chorismate synthase family. As to quaternary structure, homotetramer. It depends on FMNH2 as a cofactor.

It carries out the reaction 5-O-(1-carboxyvinyl)-3-phosphoshikimate = chorismate + phosphate. Its pathway is metabolic intermediate biosynthesis; chorismate biosynthesis; chorismate from D-erythrose 4-phosphate and phosphoenolpyruvate: step 7/7. In terms of biological role, catalyzes the anti-1,4-elimination of the C-3 phosphate and the C-6 proR hydrogen from 5-enolpyruvylshikimate-3-phosphate (EPSP) to yield chorismate, which is the branch point compound that serves as the starting substrate for the three terminal pathways of aromatic amino acid biosynthesis. This reaction introduces a second double bond into the aromatic ring system. The polypeptide is Chorismate synthase 2 (Bacillus thuringiensis subsp. konkukian (strain 97-27)).